The sequence spans 178 residues: Adenine phosphoribosyltransferase (178 aa).

This sequence belongs to the purine/pyrimidine phosphoribosyltransferase family. As to quaternary structure, homodimer.

It localises to the cytoplasm. It carries out the reaction AMP + diphosphate = 5-phospho-alpha-D-ribose 1-diphosphate + adenine. Its pathway is purine metabolism; AMP biosynthesis via salvage pathway; AMP from adenine: step 1/1. In terms of biological role, catalyzes a salvage reaction resulting in the formation of AMP, that is energically less costly than de novo synthesis. The polypeptide is Adenine phosphoribosyltransferase (Cereibacter sphaeroides (strain ATCC 17029 / ATH 2.4.9) (Rhodobacter sphaeroides)).